A 212-amino-acid chain; its full sequence is Phosphatidylserine decarboxylase proenzyme (212 aa).

Serine 182 serves as the catalytic Schiff-base intermediate with substrate; via pyruvic acid. At serine 182 the chain carries Pyruvic acid (Ser); by autocatalysis.

Belongs to the phosphatidylserine decarboxylase family. PSD-A subfamily. Heterodimer of a large membrane-associated beta subunit and a small pyruvoyl-containing alpha subunit. Pyruvate is required as a cofactor. Is synthesized initially as an inactive proenzyme. Formation of the active enzyme involves a self-maturation process in which the active site pyruvoyl group is generated from an internal serine residue via an autocatalytic post-translational modification. Two non-identical subunits are generated from the proenzyme in this reaction, and the pyruvate is formed at the N-terminus of the alpha chain, which is derived from the carboxyl end of the proenzyme. The post-translation cleavage follows an unusual pathway, termed non-hydrolytic serinolysis, in which the side chain hydroxyl group of the serine supplies its oxygen atom to form the C-terminus of the beta chain, while the remainder of the serine residue undergoes an oxidative deamination to produce ammonia and the pyruvoyl prosthetic group on the alpha chain.

The protein resides in the cell membrane. The enzyme catalyses a 1,2-diacyl-sn-glycero-3-phospho-L-serine + H(+) = a 1,2-diacyl-sn-glycero-3-phosphoethanolamine + CO2. It functions in the pathway phospholipid metabolism; phosphatidylethanolamine biosynthesis; phosphatidylethanolamine from CDP-diacylglycerol: step 2/2. Functionally, catalyzes the formation of phosphatidylethanolamine (PtdEtn) from phosphatidylserine (PtdSer). The chain is Phosphatidylserine decarboxylase proenzyme from Chlorobium limicola (strain DSM 245 / NBRC 103803 / 6330).